The following is a 418-amino-acid chain: MSFSPVAPSISAPTPRRSRWDSIGNAVAWPLAMLLMAHRFFVLAINGAVTDDFTTVYSALRRFVEGIPVYNEVYHFVDPHYLYNPGATLLLAPLGYITHFTLARWMFIAVNLLAIVLAFGLLTRLSGWALRSMVWPIAIALAMLTETVQNTLIFSNINGILLLMLAIFLWCVVHKKSWLGGLVIGLAILIKPMFLPLLFLPLVKKQWGSLILGILTPVIFNAVAWFLVPGASEYVTRTMPYLGETRDFANSSLPGLAIYFGMPTWMEITWFLIFGAMVGLAVLALLRFRNTEPYFWAATTTGVLLTGVFFLSSLGQMYYSMMIFPMIFTLLGSRSVFHNWVAWVAAYFFLSPDTFTSQRLPDVARWMEFFSATVGWGLLIVVTFVSALIWFIGDIRAKGTPSSPITTDPTHDHLERTA.

Helical transmembrane passes span Asn25–Ile45, Tyr81–Thr101, Leu102–Leu122, Leu125–Thr145, Ile153–Val173, Val183–Val203, Leu210–Gly230, Met266–Leu286, Pro293–Ser312, Ile327–Phe349, and Ala372–Ile392.

Belongs to the glycosyltransferase 87 family.

The protein resides in the cell membrane. It carries out the reaction Adds an alpha-D-arabinofuranosyl group from trans,octacis-decaprenylphospho-beta-D-arabinofuranose at the 3-O-position of an alpha-(1-&gt;5)-arabinofuranan chain attached to a beta-(1-&gt;5)-galactofuranan chain.. It participates in cell wall biogenesis; cell wall polysaccharide biosynthesis. Its function is as follows. Involved in the biosynthesis of the arabinogalactan (AG) region of the mycolylarabinogalactan-peptidoglycan (mAGP) complex, an essential component of the corynebacterial cell wall. Catalyzes the addition of an arabinofuranosyl (Araf) residue from the sugar donor beta-D-arabinofuranosyl-1-monophosphoryldecaprenol (DPA) on the C-3 of an alpha-(1-&gt;5)-linked Araf from the arabinan backbone of AG. The chain is Alpha-(1-&gt;3)-arabinofuranosyltransferase from Corynebacterium glutamicum (strain ATCC 13032 / DSM 20300 / JCM 1318 / BCRC 11384 / CCUG 27702 / LMG 3730 / NBRC 12168 / NCIMB 10025 / NRRL B-2784 / 534).